The sequence spans 260 residues: Snake venom serine protease 2B (260 aa).

The N-terminal stretch at 1-18 is a signal peptide; it reads MVLIRVLANLLILQLSYA. The propeptide occupies 19–24; sequence QKSSEL. One can recognise a Peptidase S1 domain in the interval 25 to 251; that stretch reads VVGGDECNIN…HLDWIQSIIA (227 aa). 6 disulfide bridges follow: cysteine 31-cysteine 165, cysteine 52-cysteine 68, cysteine 102-cysteine 258, cysteine 144-cysteine 212, cysteine 176-cysteine 191, and cysteine 202-cysteine 227. Histidine 67 (charge relay system) is an active-site residue. 2 N-linked (GlcNAc...) asparagine glycosylation sites follow: asparagine 101 and asparagine 105. Aspartate 112 functions as the Charge relay system in the catalytic mechanism. N-linked (GlcNAc...) asparagine glycosylation is found at asparagine 123 and asparagine 156. Serine 206 serves as the catalytic Charge relay system.

This sequence belongs to the peptidase S1 family. Snake venom subfamily. As to quaternary structure, monomer. In terms of tissue distribution, expressed by the venom gland.

It is found in the secreted. In terms of biological role, snake venom serine protease that may act in the hemostasis system of the prey. The chain is Snake venom serine protease 2B (TLG2B) from Craspedocephalus gramineus (Bamboo pit viper).